We begin with the raw amino-acid sequence, 215 residues long: Chymomexicain (215 aa).

3 disulfides stabilise this stretch: Cys-22–Cys-63, Cys-56–Cys-96, and Cys-154–Cys-201. Cys-25 is an active-site residue. Catalysis depends on residues His-160 and Asn-176.

Belongs to the peptidase C1 family.

In terms of biological role, cysteine protease. The protein is Chymomexicain of Jacaratia mexicana (Wild papaya).